The primary structure comprises 2346 residues: MDLSGPQTLNNILQPDELKLVPEDVQKKLSEYINNFSDEYCKNRAAANRLAEAEQKKEELENKMEDYLVKFTSFELNVNELRTHLDQMSSERVNLMDTIAKGEQTISQLRKEKASVVEERDSMMKVIERQQAELERLKQDLHTYQQQLSSAIAAKCEAIARVDEIQSKEVALELKENRMESERDMLHKEILLISGDLNKSNAELQNIRREHTINTMQLQSCLKEKTESLKLMQEQYEQAVKTIGELTSKIEMQNDTAFKQNQATEEYVGKLKKELDAKEKLFEIFKSTESDHLIQREELLQGISEIKRLLEEAEEQCAQLTEQMETMKQKHSAELDEQNKKIQAMEQELASANDLLKQARESNLESAICQLAPSAAVASRLIRSDLSLTELYSMYAKSSEELEMRNCEIEQLKLQLKSIIAEISESAPILEKQNSDYQKMKETNSELLREHDELLQNKLCLERELERALSTLNHNQNENKKLKQTHTDLSRQVCMLLDELNCIRAGVKHVRIQPTRQLPTSESLISDNLVTFSSIEELVDRNTYLLNMSRELTELLEASEKNQDKMLLEQSKNHIRKLDARFAELEDLLTQKNNTVTTLLSKCDRYKKLYFAAQKKLGQNTVDLDDSNLEPNDSALDTSEQPAANFEESRKLEKRVRQLEQQLEGEVKKYASLKENYDYYTSEKRKNDALAQEQFDSMRKEVRELTSSNCKLMNTTEFQKEQIELLHKNIGTYKQQVTTLEERTKNYEKTIIKHEQTVHLLKDEMMAAHRKHAAADAEAQSLRQENRILRDTSSRLQIEKETYHREQQSQSLLLNSLEFIKTNLERSEMEGRQRLEQRLDDTVRELAAQRRHFQEEEEKFRESINEFKRQAETAIKLKDEEKQLADKWQAELTSVREELAEKVNKVNELSKKLQEVLTPTLNDNPITAANKRAREFELKLDQATVEIESLTKELAKTREHGEQFYKMSQSAESEIKRLHELHGELVAKQEEEIKKLRSSEAELKTRISDLEAEAMLSNVTEQSKTVNQSGQLKSAQDDLKSLLEKLTEANCTIRTLRSENTSLVESLNAAEVKYANGMIQHSADIQELTRYKAEFFKANDELNQLKSGRESLQAAYDELLRSNAEAQKLLDKEREESEKRVADLHALNSNLHDQIEALASKLAVLASQSQNPNSSLNESAMDGDQSLNASGLTAAEEGRNNEQLLKIIKFLRKEKDLFAAKLDILKAENARLISEHAIQQKKVDELNGYLNQERAKSQTDVVSANKHEEVLRKIETLNAITDSNRILREERNALTLRVAELTDRISSVEKELFPLQCSNKELTSKIEEINVENTSLRTEAIKWRQRANALVEKSNRNPEEFKRLQAEREHLAKLLTAEKELNKKQSDELTVLKQRMNTEIPMLNKQMQILDEARKKQVDEFTNLKQNNTRQTQDIMELKNRLLQKEEELLKANEELETKDKTIADKETKELQLRKLAKRYKDFYIGLQSQGGGTESAAELEKVRSELEEVNNQLRALKDEHEKITKECDEVKKRTEPETDTSAIRQEYKAKLDKLVVDLTVARTDLVNQETTFAGTKSSYDETIARLEKELQENIAANKDINQRLTRENESLHMRINQLTRQLGSQQSTKPSTSSVAEKGNISESSPRTANVKPMSGSATVQQSATVTPWRGGETPLASIRPISVQNSRTAAILPTSQQPPAGSSTSTSSSSSSSSTSTTSAAGGGSSAVAQTALVPPQQQVHTTGSAALESMASSSPTSSHTDYMPSTSSASVAVAAIPPMGASSAAESSQEAESIQHPQQNDSQLFVGGAQQQVVALVSPRVEGSSSSSSSTSVPTATAPSIQDGGSQSQQPSTSGSSSSSSTVVSSHSRHTPSSSNVTTTQAGCSSQGIKRPRDIEGDSSTGTEEGVAEKMSKITKRLRGPMHSGELSAGHIGDSGMDVDQMPTSSQRDQEDDIQVVDSDDEEDVLADADDGPIDGGEAEQEGYEDSYEQDNEMDDNEGGDDDNDIAVDAQDNNEVDIEVPEQHMQAQEESQSLDNQAIATASASTQENNQSQAITSGSGESSNPVTLPQAEASNWKQAAASTSTAAARRNESSVEIVSSPQVSNFCEQPARLESAEVDGTAEVAGGAPHESAGPSDTGAASASSPQKQSEAGESSGSDALKAADDGGDHADGTDNAREADEAFAEETMATGQGEDSQPLGNDNPNVGTSQSEVSHNQANLGEGNPTEDSEGADGVSSEGEKQAVGVEEEGREAEATSPSENTRFRTLRSAVPTRRGHRAMRGGSPNSQNRPQRIVWQRDTSPGNIQQNQMSANNNRFAQRTRNRRPIRRPPPNNFNNGGRFP.

4 coiled-coil regions span residues 38–190, 217–366, 395–493, and 565–596; these read DEYC…HKEI, QLQS…NLES, YAKS…SRQV, and KMLLEQSKNHIRKLDARFAELEDLLTQKNNTV. The tract at residues 622–649 is disordered; that stretch reads VDLDDSNLEPNDSALDTSEQPAANFEES. Positions 629–642 are enriched in polar residues; the sequence is LEPNDSALDTSEQP. Coiled coils occupy residues 643–1158 and 1196–1247; these read AANF…IEAL and EEGR…DELN. The tract at residues 1187 to 1655 is interacts with Mad1; the sequence is LNASGLTAAE…SPRTANVKPM (469 aa). A phosphothreonine mark is found at Thr-1259, Thr-1302, Thr-1338, and Thr-1390. Coiled coils occupy residues 1281-1536 and 1579-1627; these read TDSN…KRTE and SYDE…GSQQ. Polar residues-rich tracts occupy residues 1621–1649 and 1657–1667; these read RQLGSQQSTKPSTSSVAEKGNISESSPRT and GSATVQQSATV. Disordered regions lie at residues 1621-1677, 1695-1768, and 1821-2346; these read RQLG…ETPL, PTSQ…YMPS, and SPRV…GRFP. A compositionally biased stretch (low complexity) spans 1702–1722; the sequence is AGSSTSTSSSSSSSSTSTTSA. The span at 1738–1747 shows a compositional bias: polar residues; it reads PQQQVHTTGS. 2 stretches are compositionally biased toward low complexity: residues 1752–1761 and 1827–1878; these read SMASSSPTSS and SSSS…PSSS. The span at 1879 to 1891 shows a compositional bias: polar residues; the sequence is NVTTTQAGCSSQG. Residues 1953–2023 show a composition bias toward acidic residues; it reads QEDDIQVVDS…QDNNEVDIEV (71 aa). A compositionally biased stretch (polar residues) spans 2028 to 2080; that stretch reads MQAQEESQSLDNQAIATASASTQENNQSQAITSGSGESSNPVTLPQAEASNWK. A compositionally biased stretch (low complexity) spans 2082 to 2091; it reads AAASTSTAAA. 2 stretches are compositionally biased toward polar residues: residues 2097-2110 and 2142-2159; these read SVEIVSSPQVSNFC and GAASASSPQKQSEAGESS. A compositionally biased stretch (basic and acidic residues) spans 2165–2184; that stretch reads KAADDGGDHADGTDNAREAD. Polar residues-rich tracts occupy residues 2193–2223 and 2302–2322; these read ATGQGEDSQPLGNDNPNVGTSQSEVSHNQAN and RDTSPGNIQQNQMSANNNRFA. Positions 2323-2332 are enriched in basic residues; sequence QRTRNRRPIR.

Belongs to the TPR family. As to quaternary structure, part of the nuclear pore complex (NPC). Associates with male-specific lethal (MSL) histone acetyltransferase complex. Interacts with Mad2; the interaction is required for efficient recruitment of Mad2 to unattached kinetochore and occurs in a microtubule-independent manner. Interacts with Mad1 (N-terminus). Interacts with Chro, east and Asator; the interaction is part of a macromolecular complex forming the spindle matrix during mitosis. Interacts with Nup98. In males, interacts with histone acetyltransferase mof. Post-translationally, mps1-mediated phosphorylation disrupts interaction with Mad1 during mitosis. Expressed in salivary glands, fat body, tracheal tube, esophageal tube and anterior ejaculatory duct (at protein level).

The protein resides in the nucleus. The protein localises to the nucleus matrix. It localises to the nucleus lamina. Its subcellular location is the nucleus envelope. It is found in the nucleus membrane. The protein resides in the nuclear pore complex. The protein localises to the cytoplasm. It localises to the cytoskeleton. Its subcellular location is the spindle. It is found in the chromosome. The protein resides in the centromere. The protein localises to the kinetochore. It localises to the midbody. In terms of biological role, component of the nuclear pore complex (NPC), a complex required for the trafficking across the nuclear envelope. Functions as a scaffolding element in the nuclear phase of the NPC. Plays a role in chromosomal organization and gene expression regulation; stimulates transcription by promoting the formation of an open chromatin environment. Binds chromatin to nucleoporin-associated regions (NARs) that define transcriptionally active regions of the genome. Associates with extended chromosomal regions that alternate between domains of high density binding with those of low occupancy. Preferentially binds to NARs of the male X chromosome. In males, together with Nup153, required for the localization of the male-specific lethal (MSL) histone acetyltransferase complex to the X chromosome and therefore for the transcription of dosage compensation genes. In males, restrains dosage-compensated expression at the level of nascent transcription probably by interacting with the MSL complex and by modulating RNA Polymerase II phosphorylation status and activity. During mitosis forms a gel-like spindle matrix complex together with Skeletor (Skel), Chro, east, and Asator embedding the microtubule spindle apparatus. During interphase localizes Mad1 to the nuclear pore complex and thereby might act as a scaffold to assemble the Mad1-C-Mad2 complex, a heterotetramer that catalyzes the structural conversion of open-Mad2 (O-Mad2) into closed-Mad2 (C-Mad2) which is essential for spindle-assembly checkpoint (SAC). During the metaphase-anaphase transition and before chromosome congression, is phosphorylated by Msp-1; this modification releases Mad1 from the nuclear pore complex and thereby promotes assembly of SAC ensuring a timely and effective recruitment of spindle checkpoint proteins like Mad1, Mad2 and Mps1 to unattached kinetochores (KT). In testes, has a role in stem cell asymmetric division and maintenance via regulation of mitotic spindle assembly checkpoint (SAC) complex. The sequence is that of Nucleoprotein TPR from Drosophila melanogaster (Fruit fly).